Consider the following 293-residue polypeptide: Elongation factor Ts (293 aa).

The involved in Mg(2+) ion dislocation from EF-Tu stretch occupies residues 80 to 83 (TDFV).

The protein belongs to the EF-Ts family.

It localises to the cytoplasm. Its function is as follows. Associates with the EF-Tu.GDP complex and induces the exchange of GDP to GTP. It remains bound to the aminoacyl-tRNA.EF-Tu.GTP complex up to the GTP hydrolysis stage on the ribosome. The polypeptide is Elongation factor Ts (Burkholderia thailandensis (strain ATCC 700388 / DSM 13276 / CCUG 48851 / CIP 106301 / E264)).